A 127-amino-acid chain; its full sequence is Mitochondrial pyruvate carrier 2 (127 aa).

Topologically, residues Ala2 to Thr40 are mitochondrial matrix. Lys26 bears the N6-acetyllysine mark. A helical membrane pass occupies residues Val41–Ala61. Topologically, residues Arg62–Ser72 are mitochondrial intermembrane. Residues Thr73–Ile90 form a helical membrane-spanning segment. Residues Pro91–Lys92 lie on the Mitochondrial matrix side of the membrane. The helical transmembrane segment at Asn93–Trp115 threads the bilayer. Over Arg116–Gln127 the chain is Mitochondrial intermembrane.

Belongs to the mitochondrial pyruvate carrier (MPC) (TC 2.A.105) family. In terms of assembly, homodimer. Homooligomer. Forms heterodimers with MPC1 and MPC1L. The heterodimer is the more stable and dominant form.

It is found in the mitochondrion inner membrane. The catalysed reaction is pyruvate(out) + H(+)(out) = pyruvate(in) + H(+)(in). Its function is as follows. Mediates the uptake of pyruvate into mitochondria. The chain is Mitochondrial pyruvate carrier 2 (Mpc2) from Mus musculus (Mouse).